The primary structure comprises 2282 residues: Zonadhesin (2282 aa).

2 MAM domains span residues 1–147 and 150–315; these read MFFA…PCGE and PQCV…TCHV. Residues 1–2235 are Extracellular-facing; the sequence is MFFATGRASA…VLLPPKPDTS (2235 aa). N-linked (GlcNAc...) asparagine glycans are attached at residues Asn112 and Asn272. The interval 315–498 is 26 X approximate heptapeptide repeats (mucin-like domain); the sequence is VPVPPVIPIK…STTTTPSPTT (184 aa). The segment covering 333–356 has biased composition (low complexity); that stretch reads PTVPAEGTTEPPEGTIELPEGTTK. The interval 333 to 495 is disordered; it reads PTVPAEGTTE…TTLSTTTTPS (163 aa). Residues 360–369 are compositionally biased toward acidic residues; that stretch reads ETTELPEEIT. Positions 379–398 are enriched in pro residues; that stretch reads TEPPTVPTEPPTVPTEPPTV. Composition is skewed to low complexity over residues 399–420 and 427–495; these read PTEK…TSIP and PTEK…TTPS. Positions 501 to 550 constitute a TIL 1 domain; the sequence is CPANAHYESCACPASCKHPKASCKPPCQPGCVCDPGLVFSNNSCIKASSC. N-linked (GlcNAc...) asparagine glycans are attached at residues Asn541 and Asn569. In terms of domain architecture, VWFC 1 spans 551-605; it reads PCLYNNNNYEPEAEWFSPNCTELCHCWPGGRIECQISQCKTHTKCQLKNGQYECQ. One can recognise a VWFD 1 domain in the interval 610-787; sequence ATCFVYGDPH…WAQDEDKECQ (178 aa). 2 disulfides stabilise this stretch: Cys612-Cys747 and Cys634-Cys786. Positions 881–934 constitute a TIL 2 domain; the sequence is CPPNSRYSLCTSPCPKTCHTGYVGMPCPEQCLEGCECNPGFILSGLECVPSAQC. Residues 935-990 form the VWFC 2 domain; that stretch reads GCLDPSRGYFKVGEQWFKSDCKQLCICEGSNQIRCQPWKCGPHEVCSQQSGIYGCH. The VWFD 2 domain maps to 995 to 1176; it reads ATCSASGDPH…LEEGSETGCF (182 aa). Disulfide bonds link Cys997–Cys1136 and Cys1019–Cys1175. 6 N-linked (GlcNAc...) asparagine glycosylation sites follow: Asn1141, Asn1259, Asn1270, Asn1355, Asn1467, and Asn1483. One can recognise a TIL 3 domain in the interval 1267-1322; the sequence is CPPNSSYSPCGSPCPGTCLSLNHPKDCPITLPCVEGCECQNGYILSGTSCVPLNQC. One can recognise a VWFC 3 domain in the interval 1323-1379; sequence GCTDFEGSYHLVRESWYTDNTCSRLCTCSLHNNITCRQTACKPGQQCWAVDGLLRCR. The region spanning 1384–1564 is the VWFD 3 domain; it reads GVCQVTGDSR…KDNNIDPNCQ (181 aa). 2 disulfide bridges follow: Cys1386-Cys1525 and Cys1408-Cys1563. Residues 1561–1588 form a disordered region; the sequence is PNCQKSQEGKGKPQEEQGPSGSSKKASC. A compositionally biased stretch (polar residues) spans 1577-1586; the sequence is QGPSGSSKKA. Asn1662 carries an N-linked (GlcNAc...) asparagine glycan. One can recognise a TIL 4 domain in the interval 1670 to 1726; sequence CPAYSTYTNCLPSCSPSCFDPDGRCEGARAPSSCAEGCTCQPGYVLSKNKCVAKDQC. Positions 1727–1782 constitute a VWFC 4 domain; that stretch reads SCRDAQGGSIPSGKSWVSSGCSQKCACTEGSIQCRAFHCPSRSHCKLNSNGNSNCV. A VWFD 4 domain is found at 1787–1963; it reads DQCSIFGGPH…SWEVKTEDSV (177 aa). Cys1789 and Cys1926 are joined by a disulfide. The N-linked (GlcNAc...) asparagine glycan is linked to Asn1997. The TIL 5 domain occupies 2076–2129; the sequence is CPANTVYQSCMTPCPESCANLAAPRDCEGPCVEGCASLPGYAFSGAQSLPLANC. The region spanning 2130–2184 is the VWFC 5 domain; sequence GCTSNGIYYQLGHSFVTADCSQRCTCASSGVLLCEPFSCRPGESCTLGNLTRGCF. Residue Asn2178 is glycosylated (N-linked (GlcNAc...) asparagine). The region spanning 2185–2221 is the EGF-like domain; that stretch reads RESPCLRNPCQNDGRCREQGTSFTCECEPGYGGHLCT. 3 cysteine pairs are disulfide-bonded: Cys2189-Cys2200, Cys2194-Cys2209, and Cys2211-Cys2220. The chain crosses the membrane as a helical span at residues 2236–2256; sequence NLVAILLGMLVSLVVTVPVLA. Topologically, residues 2257–2282 are cytoplasmic; that stretch reads RKCVSRKRRRWREKTQSEPRSAPGRR.

Probably forms covalent oligomers.

It is found in the cell membrane. Functionally, binds in a species-specific manner to the zona pellucida of the egg. May be involved in gamete recognition and/or signaling. In Oryctolagus cuniculus (Rabbit), this protein is Zonadhesin (ZAN).